The primary structure comprises 96 residues: Aspartyl/glutamyl-tRNA(Asn/Gln) amidotransferase subunit C (96 aa).

Belongs to the GatC family. Heterotrimer of A, B and C subunits.

It carries out the reaction L-glutamyl-tRNA(Gln) + L-glutamine + ATP + H2O = L-glutaminyl-tRNA(Gln) + L-glutamate + ADP + phosphate + H(+). It catalyses the reaction L-aspartyl-tRNA(Asn) + L-glutamine + ATP + H2O = L-asparaginyl-tRNA(Asn) + L-glutamate + ADP + phosphate + 2 H(+). Allows the formation of correctly charged Asn-tRNA(Asn) or Gln-tRNA(Gln) through the transamidation of misacylated Asp-tRNA(Asn) or Glu-tRNA(Gln) in organisms which lack either or both of asparaginyl-tRNA or glutaminyl-tRNA synthetases. The reaction takes place in the presence of glutamine and ATP through an activated phospho-Asp-tRNA(Asn) or phospho-Glu-tRNA(Gln). In Trichormus variabilis (strain ATCC 29413 / PCC 7937) (Anabaena variabilis), this protein is Aspartyl/glutamyl-tRNA(Asn/Gln) amidotransferase subunit C.